We begin with the raw amino-acid sequence, 456 residues long: Argininosuccinate lyase (456 aa).

Belongs to the lyase 1 family. Argininosuccinate lyase subfamily.

Its subcellular location is the cytoplasm. It carries out the reaction 2-(N(omega)-L-arginino)succinate = fumarate + L-arginine. It functions in the pathway amino-acid biosynthesis; L-arginine biosynthesis; L-arginine from L-ornithine and carbamoyl phosphate: step 3/3. The chain is Argininosuccinate lyase from Listeria monocytogenes serotype 4b (strain F2365).